The sequence spans 342 residues: Ferredoxin--NADP reductase (342 aa).

FAD contacts are provided by cysteine 17, aspartate 36, glutamine 44, tyrosine 49, valine 89, phenylalanine 124, aspartate 289, and threonine 330.

The protein belongs to the ferredoxin--NADP reductase type 2 family. As to quaternary structure, homodimer. It depends on FAD as a cofactor.

It catalyses the reaction 2 reduced [2Fe-2S]-[ferredoxin] + NADP(+) + H(+) = 2 oxidized [2Fe-2S]-[ferredoxin] + NADPH. This is Ferredoxin--NADP reductase from Bradyrhizobium diazoefficiens (strain JCM 10833 / BCRC 13528 / IAM 13628 / NBRC 14792 / USDA 110).